A 179-amino-acid chain; its full sequence is Large ribosomal subunit protein uL5 (179 aa).

Belongs to the universal ribosomal protein uL5 family. As to quaternary structure, part of the 50S ribosomal subunit; part of the 5S rRNA/L5/L18/L25 subcomplex. Contacts the 5S rRNA and the P site tRNA. Forms a bridge to the 30S subunit in the 70S ribosome.

In terms of biological role, this is one of the proteins that bind and probably mediate the attachment of the 5S RNA into the large ribosomal subunit, where it forms part of the central protuberance. In the 70S ribosome it contacts protein S13 of the 30S subunit (bridge B1b), connecting the 2 subunits; this bridge is implicated in subunit movement. Contacts the P site tRNA; the 5S rRNA and some of its associated proteins might help stabilize positioning of ribosome-bound tRNAs. In Staphylococcus epidermidis (strain ATCC 35984 / DSM 28319 / BCRC 17069 / CCUG 31568 / BM 3577 / RP62A), this protein is Large ribosomal subunit protein uL5.